Here is a 162-residue protein sequence, read N- to C-terminus: Cyclic pyranopterin monophosphate synthase (162 aa).

Substrate is bound by residues 75–77 (LCH) and 113–114 (ME). Asp-128 is a catalytic residue.

The protein belongs to the MoaC family. In terms of assembly, homohexamer; trimer of dimers.

The enzyme catalyses (8S)-3',8-cyclo-7,8-dihydroguanosine 5'-triphosphate = cyclic pyranopterin phosphate + diphosphate. It participates in cofactor biosynthesis; molybdopterin biosynthesis. Catalyzes the conversion of (8S)-3',8-cyclo-7,8-dihydroguanosine 5'-triphosphate to cyclic pyranopterin monophosphate (cPMP). The chain is Cyclic pyranopterin monophosphate synthase from Klebsiella pneumoniae (strain 342).